The primary structure comprises 163 residues: Gas vesicle protein H2 (163 aa).

The segment at 57–92 is disordered; sequence LGSDARSPSTPAGNADDAGDAETAHIETRASDDSDD. Residues 78-88 are compositionally biased toward basic and acidic residues; it reads ETAHIETRASD.

This sequence belongs to the gas vesicle GvpH family. In terms of assembly, gvpF to GvpM interact with each other in vitro, and may form multi-subunit complex(es). Interacts with GvpC. Might interact with GvpA.

It is found in the gas vesicle. It localises to the cytoplasm. In terms of biological role, a minor component of the gas vesicle, also found in soluble extracts. Proteins GvpF to GvpM might be involved in nucleating gas vesicle formation. Gas vesicles are hollow, gas filled proteinaceous nanostructures found in several microbial planktonic microorganisms. They allow positioning of halobacteria at the optimal depth for growth in the poorly aerated, shallow brine pools of their habitat. Its function is as follows. Expression of 2 c-vac DNA fragments containing 2 divergently transcribed regions (gvpE-gvpF-gvpG-gvpH-gvpI-gvpJ-gvpK-gvpL-gvpM and gvpA-gvpC-gvpN-gvpO) allows H.volcanii to produce gas vesicles. This is Gas vesicle protein H2 from Halobacterium salinarum (strain ATCC 700922 / JCM 11081 / NRC-1) (Halobacterium halobium).